Consider the following 2473-residue polypeptide: Neurogenic locus notch homolog protein 2 (2473 aa).

An N-terminal signal peptide occupies residues 1–25; it reads MPALRPAALRALLWLWLCGAGPAHA. EGF-like domains are found at residues 26–63, 64–102, 105–143, and 144–180; these read LQCR…EYCQ, HRDP…EDCQ, TSHP…KQCQ, and WTDA…QKCE. Over 26–1679 the chain is Extracellular; it reads LQCRGGQEPC…SELESPRNAQ (1654 aa). 83 disulfides stabilise this stretch: Cys-28–Cys-41, Cys-35–Cys-51, Cys-53–Cys-62, Cys-68–Cys-79, Cys-73–Cys-90, Cys-92–Cys-101, Cys-109–Cys-121, Cys-115–Cys-131, Cys-133–Cys-142, Cys-148–Cys-159, Cys-153–Cys-168, Cys-170–Cys-179, Cys-186–Cys-198, Cys-192–Cys-207, Cys-209–Cys-218, Cys-230–Cys-246, Cys-248–Cys-257, Cys-264–Cys-275, Cys-269–Cys-284, Cys-286–Cys-295, Cys-302–Cys-315, Cys-309–Cys-324, Cys-326–Cys-335, Cys-342–Cys-353, Cys-347–Cys-362, Cys-364–Cys-373, Cys-379–Cys-390, Cys-384–Cys-401, Cys-403–Cys-412, Cys-419–Cys-433, Cys-427–Cys-442, Cys-444–Cys-453, Cys-460–Cys-471, Cys-465–Cys-480, Cys-482–Cys-491, Cys-498–Cys-509, Cys-503–Cys-518, Cys-520–Cys-529, Cys-536–Cys-547, Cys-541–Cys-556, Cys-558–Cys-567, Cys-574–Cys-584, Cys-579–Cys-593, Cys-595–Cys-604, Cys-611–Cys-622, Cys-616–Cys-631, Cys-633–Cys-642, Cys-649–Cys-659, Cys-654–Cys-668, Cys-670–Cys-679, Cys-686–Cys-697, Cys-691–Cys-706, Cys-708–Cys-717, Cys-724–Cys-734, Cys-729–Cys-743, Cys-745–Cys-754, Cys-761–Cys-772, Cys-766–Cys-781, Cys-783–Cys-792, Cys-799–Cys-810, Cys-804–Cys-819, Cys-821–Cys-830, Cys-837–Cys-848, Cys-842–Cys-859, Cys-861–Cys-870, Cys-877–Cys-888, Cys-882–Cys-897, Cys-899–Cys-908, Cys-915–Cys-926, Cys-920–Cys-935, Cys-937–Cys-946, Cys-953–Cys-964, Cys-958–Cys-973, Cys-975–Cys-984, Cys-991–Cys-1002, Cys-996–Cys-1011, Cys-1013–Cys-1022, Cys-1029–Cys-1040, Cys-1034–Cys-1049, Cys-1051–Cys-1060, Cys-1067–Cys-1078, Cys-1072–Cys-1087, and Cys-1089–Cys-1098. N-linked (GlcNAc...) asparagine glycosylation occurs at Asn-46. Asn-155 carries an N-linked (GlcNAc...) asparagine glycan. An EGF-like 5; calcium-binding domain is found at 182–219; that stretch reads DINECDIPGRCQHGGTCLNLPGSYRCQCPQGFTGQHCD. Residues 221–258 enclose the EGF-like 6; incomplete domain; it reads PYVPCAPSPCVNGGTCRQTGDFTFECNCLPGFEGSTCE. Residues 260-296 form the EGF-like 7; calcium-binding domain; that stretch reads NIDDCPNHKCQNGGVCVDGVNTYNCRCPPQWTGQFCT. The EGF-like 8; calcium-binding domain occupies 298-336; sequence DVDECLLQPNACQNGGTCTNRNGGYGCVCVNGWSGDDCS. The EGF-like 9; calcium-binding domain occupies 338–374; the sequence is NIDDCAYASCTPGSTCIDRVASFSCLCPEGKAGLLCH. The EGF-like 10 domain occupies 375–413; sequence LDDACISNPCHKGALCDTNPLNGQYICTCPQGYKGADCT. In terms of domain architecture, EGF-like 11; calcium-binding spans 415-454; sequence DVDECAMANSNPCEHAGKCVNTDGAFHCECLKGYAGPRCE. Residues 456 to 492 enclose the EGF-like 12; calcium-binding domain; that stretch reads DINECHSDPCQNDATCLDKIGGFTCLCMPGFKGVHCE. The region spanning 494–530 is the EGF-like 13; calcium-binding domain; that stretch reads EVNECQSNPCVNNGQCVDKVNRFQCLCPPGFTGPVCQ. In terms of domain architecture, EGF-like 14; calcium-binding spans 532–568; that stretch reads DIDDCSSTPCLNGAKCIDHPNGYECQCATGFTGILCD. Positions 570-605 constitute an EGF-like 15; calcium-binding domain; that stretch reads NIDNCDPDPCHHGQCQDGIDSYTCICNPGYMGAICS. The region spanning 607-643 is the EGF-like 16; calcium-binding domain; it reads QIDECYSSPCLNDGRCIDLVNGYQCNCQPGTSGLNCE. Ser-613 is a glycosylation site (O-linked (Glc...) serine; alternate). Ser-613 carries O-linked (Xyl...) serine; alternate glycosylation. The region spanning 645–680 is the EGF-like 17; calcium-binding domain; it reads NFDDCASNPCMHGVCVDGINRYSCVCSPGFTGQRCN. The 37-residue stretch at 682 to 718 folds into the EGF-like 18; calcium-binding domain; it reads DIDECASNPCRKGATCINDVNGFRCICPEGPHHPSCY. An EGF-like 19 domain is found at 720–755; the sequence is QVNECLSNPCIHGNCTGGLSGYKCLCDAGWVGVNCE. A glycan (N-linked (GlcNAc...) asparagine) is linked at Asn-733. The region spanning 757–793 is the EGF-like 20; calcium-binding domain; it reads DKNECLSNPCQNGGTCNNLVNGYRCTCKKGFKGYNCQ. The 37-residue stretch at 795–831 folds into the EGF-like 21; calcium-binding domain; sequence NIDECASNPCLNQGTCFDDVSGYTCHCMLPYTGKNCQ. In terms of domain architecture, EGF-like 22 spans 833-871; it reads VLAPCSPNPCENAAVCKEAPNFESFSCLCAPGWQGKRCT. In terms of domain architecture, EGF-like 23; calcium-binding spans 873-909; sequence DVDECISKPCMNNGVCHNTQGSYVCECPPGFSGMDCE. The region spanning 911-947 is the EGF-like 24; calcium-binding domain; the sequence is DINDCLANPCQNGGSCVDHVNTFSCQCHPGFIGDKCQ. One can recognise an EGF-like 25; calcium-binding domain in the interval 949–985; that stretch reads DMNECLSEPCKNGGTCSDYVNSYTCTCPAGFHGVHCE. The region spanning 987–1023 is the EGF-like 26; calcium-binding domain; sequence NIDECTESSCFNGGTCVDGINSFSCLCPVGFTGPFCL. Residues 1025–1061 enclose the EGF-like 27; calcium-binding domain; that stretch reads DINECSSNPCLNAGTCVDGLGTYRCICPLGYTGKNCQ. 2 EGF-like domains span residues 1063-1099 and 1101-1147; these read LVNL…AYCD and LNVS…SYCE. N-linked (GlcNAc...) asparagine glycosylation occurs at Asn-1102. Intrachain disulfides connect Cys-1105–Cys-1126, Cys-1120–Cys-1135, Cys-1137–Cys-1146, Cys-1153–Cys-1164, Cys-1158–Cys-1173, Cys-1175–Cys-1184, Cys-1191–Cys-1202, Cys-1196–Cys-1211, Cys-1213–Cys-1222, Cys-1229–Cys-1241, Cys-1235–Cys-1250, Cys-1252–Cys-1261, Cys-1268–Cys-1281, Cys-1273–Cys-1290, Cys-1292–Cys-1301, Cys-1308–Cys-1319, Cys-1313–Cys-1331, Cys-1333–Cys-1346, Cys-1378–Cys-1389, Cys-1383–Cys-1400, Cys-1402–Cys-1411, Cys-1425–Cys-1448, Cys-1430–Cys-1443, and Cys-1439–Cys-1455. An EGF-like 30; calcium-binding domain is found at 1149-1185; it reads QLDECASNPCQHGATCNDFIGGYRCECVPGYQGVNCE. The region spanning 1187–1223 is the EGF-like 31; calcium-binding domain; the sequence is EVDECQNQPCQNGGTCIDLVNHFKCSCPPGTRGLLCE. The 38-residue stretch at 1225 to 1262 folds into the EGF-like 32; calcium-binding domain; sequence NIDECAGGPHCLNGGQCVDRIGGYTCRCLPGFAGERCE. 3 EGF-like domains span residues 1264–1302, 1304–1343, and 1375–1412; these read DINE…RHCE, FLDV…ARCQ, and ESGC…SHCE. LNR repeat units follow at residues 1425-1465, 1466-1502, and 1503-1544; these read CQSQ…PWAN, CTST…NSKT, and CKYD…NLAE. Residues 1425-1679 are negative regulatory region (NRR); that stretch reads CQSQYCADKA…SELESPRNAQ (255 aa). A glycan (N-linked (GlcNAc...) asparagine) is linked at Asn-1465. 7 disulfides stabilise this stretch: Cys-1466-Cys-1489, Cys-1472-Cys-1484, Cys-1480-Cys-1496, Cys-1503-Cys-1527, Cys-1509-Cys-1522, Cys-1518-Cys-1534, and Cys-1634-Cys-1641. Residues 1680-1700 form a helical membrane-spanning segment; that stretch reads LLYLLAVAVVIILFFILLGVI. Residues 1701-2473 are Cytoplasmic-facing; that stretch reads MAKRKRKHGF…PPHSNMQVYA (773 aa). At Thr-1718 the chain carries Phosphothreonine. The disordered stretch occupies residues 1755 to 1778; sequence GTSEHWVDDEGPQPKKAKAEDEAL. Ser-1780 carries the post-translational modification Phosphoserine. Thr-1803 carries the phosphothreonine modification. At Ser-1805 the chain carries Phosphoserine. Residue Thr-1809 is modified to Phosphothreonine. 6 ANK repeats span residues 1828–1872, 1877–1906, 1910–1940, 1944–1973, 1977–2006, and 2010–2039; these read DGCT…SLQA, TGEM…DANA, MGRC…DLDA, DGTT…DVNA, HGKS…NRDM, and KEET…NRDI. 2 positions are modified to phosphoserine: Ser-1843 and Ser-1846. Phosphoserine occurs at positions 2071, 2079, and 2082. Thr-2098 carries the phosphothreonine modification. Disordered stretches follow at residues 2098–2117, 2122–2169, and 2382–2473; these read TPMG…PTSL, KEAK…TSSP, and VGKY…QVYA. The span at 2099–2108 shows a compositional bias: basic residues; it reads PMGKKARRPN. Composition is skewed to polar residues over residues 2140–2151 and 2390–2400; these read VQLSESSVTLSP and SQHSYASSNAA. A compositionally biased stretch (low complexity) spans 2419–2446; the sequence is PSPESPDQWSSSSPHSASDWSDVTTSPT. Gly residues predominate over residues 2447 to 2456; it reads PGGGGGGQRG.

The protein belongs to the NOTCH family. Heterodimer of a C-terminal fragment N(TM) and an N-terminal fragment N(EC) which are probably linked by disulfide bonds. Interacts with MAML1, MAML2 and MAML3 which act as transcriptional coactivators for NOTCH2. Interacts with RELA/p65. Interacts with HIF1AN. Interacts (via ANK repeats) with TCIM, the interaction inhibits the nuclear translocation of NOTCH2 N2ICD. Interacts with CUL1, RBX1, SKP1 and FBXW7 that are SCF(FBXW7) E3 ubiquitin-protein ligase complex components. Interacts with MINAR1; this interaction increases MINAR1 stability and function. Interacts with MDK; this interaction mediates a nuclear accumulation of NOTCH2 and therefore activation of NOTCH2 signaling leading to interaction between HES1 and STAT3. Interacts with MINAR2. In terms of processing, synthesized in the endoplasmic reticulum as an inactive form which is proteolytically cleaved by a furin-like convertase in the trans-Golgi network before it reaches the plasma membrane to yield an active, ligand-accessible form. Cleavage results in a C-terminal fragment N(TM) and a N-terminal fragment N(EC). Following ligand binding, it is cleaved by TNF-alpha converting enzyme (TACE) to yield a membrane-associated intermediate fragment called notch extracellular truncation (NEXT). This fragment is then cleaved by presenilin dependent gamma-secretase to release a notch-derived peptide containing the intracellular domain (NICD) from the membrane. Hydroxylated by HIF1AN. Post-translationally, can be either O-glucosylated or O-xylosylated at Ser-613 by POGLUT1. In terms of processing, phosphorylated by GSK3. GSK3-mediated phosphorylation is necessary for NOTCH2 recognition by FBXW7, ubiquitination and degradation via the ubiquitin proteasome pathway. As to expression, expressed in the brain, liver, kidney, neuroepithelia, somites, optic vesicles and branchial arches, but not heart.

Its subcellular location is the cell membrane. It localises to the nucleus. The protein resides in the cytoplasm. In terms of biological role, functions as a receptor for membrane-bound ligands Jagged-1 (JAG1), Jagged-2 (JAG2) and Delta-1 (DLL1) to regulate cell-fate determination. Upon ligand activation through the released notch intracellular domain (NICD) it forms a transcriptional activator complex with RBPJ/RBPSUH and activates genes of the enhancer of split locus. Affects the implementation of differentiation, proliferation and apoptotic programs. May play an essential role in postimplantation development, probably in some aspect of cell specification and/or differentiation. In collaboration with RELA/p65 enhances NFATc1 promoter activity and positively regulates RANKL-induced osteoclast differentiation. Positively regulates self-renewal of liver cancer cells. This Mus musculus (Mouse) protein is Neurogenic locus notch homolog protein 2.